The primary structure comprises 1954 residues: Integrin beta-like protein C (1954 aa).

The first 20 residues, 1–20, serve as a signal peptide directing secretion; that stretch reads MNKLFYLFILIASLFILTDA. Residues 21–1883 are Extracellular-facing; that stretch reads SHFRFGTISW…TTTQTNDNKT (1863 aa). N-linked (GlcNAc...) asparagine glycans are attached at residues Asn138 and Asn354. Residues 428–465 form the EGF-like domain; the sequence is YGENCVAVPPCVNGVPNSGINGDGKCLCSNGWTGADCS. 2 disulfides stabilise this stretch: Cys438-Cys453 and Cys455-Cys464. An N-linked (GlcNAc...) asparagine glycan is attached at Asn479. The 186-residue stretch at 521–706 folds into the VWFA domain; the sequence is DVYVLVDANL…TGVKNVLSKI (186 aa). N-linked (GlcNAc...) asparagine glycosylation is found at Asn1348, Asn1382, Asn1628, Asn1678, Asn1742, Asn1770, Asn1820, Asn1860, and Asn1881. Residues 1884–1904 traverse the membrane as a helical segment; the sequence is VLTGAIAGAAAGTALIAAAAW. Topologically, residues 1905-1954 are cytoplasmic; the sequence is RLLRKAAPPTDTFFSEAAFLGDGVSSNPLYEQSASAAENPLYQSASDTTD.

Belongs to the SIB family. In terms of assembly, interacts with talA/talin.

The protein localises to the membrane. Functionally, implicated in cellular adhesion. This Dictyostelium discoideum (Social amoeba) protein is Integrin beta-like protein C (sibC).